The primary structure comprises 143 residues: Small ribosomal subunit protein uS12 (143 aa).

The protein belongs to the universal ribosomal protein uS12 family. In terms of assembly, component of the 40S small ribosomal subunit.

It is found in the cytoplasm. Its subcellular location is the cytosol. It localises to the rough endoplasmic reticulum. The polypeptide is Small ribosomal subunit protein uS12 (rps23) (Gillichthys mirabilis (Long-jawed mudsucker)).